Reading from the N-terminus, the 623-residue chain is Transketolase (623 aa).

An N-acetylmethionine modification is found at M1. S3 carries the phosphoserine modification. 2 positions are modified to N6-acetyllysine: K6 and K11. A substrate-binding site is contributed by H37. Thiamine diphosphate-binding residues include S40 and H77. Position 104 is a phosphoserine (S104). Position 123 to 125 (123 to 125) interacts with thiamine diphosphate; that stretch reads GSL. An N6-acetyllysine modification is found at K144. D155 provides a ligand contact to Mg(2+). The thiamine diphosphate site is built by G156 and N185. Mg(2+) contacts are provided by N185 and L187. 3 positions are modified to N6-acetyllysine: K204, K232, and K241. K244 and H258 together coordinate thiamine diphosphate. H258 lines the substrate pocket. Residue K260 is modified to N6-acetyllysine. Position 275 is a phosphotyrosine (Y275). Phosphothreonine is present on T287. Position 295 is a phosphoserine (S295). 2 residues coordinate substrate: R318 and S345. S345 carries the post-translational modification Phosphoserine. Residue K352 forms a Glycyl lysine isopeptide (Lys-Gly) (interchain with G-Cter in SUMO2) linkage. E366 functions as the Proton donor in the catalytic mechanism. Thiamine diphosphate is bound at residue F392. Substrate is bound by residues H416 and D424. Residue Q428 coordinates thiamine diphosphate. R474 contributes to the substrate binding site. N6-acetyllysine is present on residues K538 and K603.

It belongs to the transketolase family. In terms of assembly, homodimer. Requires Mg(2+) as cofactor. It depends on Ca(2+) as a cofactor. Mn(2+) serves as cofactor. Co(2+) is required as a cofactor. The cofactor is thiamine diphosphate.

The catalysed reaction is D-sedoheptulose 7-phosphate + D-glyceraldehyde 3-phosphate = aldehydo-D-ribose 5-phosphate + D-xylulose 5-phosphate. Catalyzes the transfer of a two-carbon ketol group from a ketose donor to an aldose acceptor, via a covalent intermediate with the cofactor thiamine pyrophosphate. The sequence is that of Transketolase (TKT) from Homo sapiens (Human).